Consider the following 267-residue polypeptide: Glucosamine-6-phosphate deaminase (267 aa).

Catalysis depends on D76, which acts as the Proton acceptor; for enolization step. Residue D145 is the For ring-opening step of the active site. Residue H147 is the Proton acceptor; for ring-opening step of the active site. The For ring-opening step role is filled by E152.

It belongs to the glucosamine/galactosamine-6-phosphate isomerase family. Homohexamer.

Its subcellular location is the cytoplasm. The catalysed reaction is alpha-D-glucosamine 6-phosphate + H2O = beta-D-fructose 6-phosphate + NH4(+). The protein operates within nucleotide-sugar biosynthesis; UDP-N-acetyl-alpha-D-glucosamine biosynthesis; alpha-D-glucosamine 6-phosphate from D-fructose 6-phosphate: step 1/1. Its function is as follows. Catalyzes the reversible conversion of alpha-D-glucosamine 6-phosphate (GlcN-6P) into beta-D-fructose 6-phosphate (Fru-6P) and ammonium ion, a regulatory reaction step in de novo uridine diphosphate-N-acetyl-alpha-D-glucosamine (UDP-GlcNAc) biosynthesis via hexosamine pathway. The polypeptide is Glucosamine-6-phosphate deaminase (Dictyostelium discoideum (Social amoeba)).